The primary structure comprises 600 residues: Oligopeptide-binding protein OppA (600 aa).

Positions 1–22 (MNKLKVTLLASSVVLAATLLSA) are cleaved as a signal peptide. A lipid anchor (N-palmitoyl cysteine) is attached at Cys-23. The S-diacylglycerol cysteine moiety is linked to residue Cys-23.

The protein belongs to the bacterial solute-binding protein 5 family. The complex is composed of two ATP-binding proteins (OppD and OppF), two transmembrane proteins (OppB and OppC) and a solute-binding protein (OppA).

It is found in the cell membrane. Part of the ABC transporter complex OppABCDF involved in the uptake of oligopeptides. Essential for uptake of peptides larger than three amino acids and for growth in milk. The polypeptide is Oligopeptide-binding protein OppA (Lactococcus lactis subsp. lactis (Streptococcus lactis)).